A 455-amino-acid polypeptide reads, in one-letter code: Indoleacetamide hydrolase (455 aa).

Catalysis depends on charge relay system residues K71 and S146. S170 (acyl-ester intermediate) is an active-site residue.

This sequence belongs to the amidase family.

It participates in plant hormone metabolism; auxin biosynthesis. In terms of biological role, hydrolyzes indole-3-acetamide (IAM) into indole-3-acetic acid (IAA). The protein is Indoleacetamide hydrolase (iaaH) of Pseudomonas savastanoi (Pseudomonas syringae pv. savastanoi).